We begin with the raw amino-acid sequence, 245 residues long: Nodulation protein G (245 aa).

An NAD(+)-binding site is contributed by 11 to 35; it reads VTGASGAIGGAIARVLHAQGAIVGL. Ser-139 lines the substrate pocket. Tyr-152 serves as the catalytic Proton acceptor.

It belongs to the short-chain dehydrogenases/reductases (SDR) family.

Its function is as follows. Proposed to modify Nod factor fatty acyl chain. The protein is Nodulation protein G (nodG) of Rhizobium meliloti (strain 1021) (Ensifer meliloti).